A 467-amino-acid chain; its full sequence is Tubulointerstitial nephritis antigen-like (467 aa).

The N-terminal stretch at 1–21 (MWGCPLGLLLLLLAGQAALEA) is a signal peptide. Residues 49 to 96 (EQDMCCRGRADECALPYLGATCYCDLFCNRTVSDCCPDFWDFCLGIPP) enclose the SMB domain. Cystine bridges form between C53-C72, C70-C72, C70-C84, C76-C83, and C84-C91. Residue N77 is glycosylated (N-linked (GlcNAc...) asparagine). A glycan (N-linked (GlcNAc...) asparagine) is linked at N160.

The protein belongs to the peptidase C1 family. Post-translationally, glycosylated.

It localises to the secreted. In terms of biological role, may be implicated in the adrenocortical zonation and in mechanisms for repressing the CYP11B1 gene expression in adrenocortical cells. This is a non catalytic peptidase C1 family protein. The sequence is that of Tubulointerstitial nephritis antigen-like (Tinagl1) from Rattus norvegicus (Rat).